A 133-amino-acid chain; its full sequence is Methylglyoxal synthase (133 aa).

The MGS-like domain occupies methionine 1 to glycine 133. Residues histidine 12, lysine 16, threonine 38–threonine 41, and serine 58–glycine 59 each bind substrate. The active-site Proton donor/acceptor is aspartate 64. Histidine 91 is a binding site for substrate.

It belongs to the methylglyoxal synthase family.

The enzyme catalyses dihydroxyacetone phosphate = methylglyoxal + phosphate. In terms of biological role, catalyzes the formation of methylglyoxal from dihydroxyacetone phosphate. The chain is Methylglyoxal synthase from Cupriavidus taiwanensis (strain DSM 17343 / BCRC 17206 / CCUG 44338 / CIP 107171 / LMG 19424 / R1) (Ralstonia taiwanensis (strain LMG 19424)).